Reading from the N-terminus, the 896-residue chain is DNA mismatch repair protein MutS (896 aa).

An ATP-binding site is contributed by 599–606; that stretch reads GPNMAGKS.

The protein belongs to the DNA mismatch repair MutS family.

This protein is involved in the repair of mismatches in DNA. It is possible that it carries out the mismatch recognition step. This protein has a weak ATPase activity. The sequence is that of DNA mismatch repair protein MutS from Geobacillus kaustophilus (strain HTA426).